Reading from the N-terminus, the 502-residue chain is Pyruvate kinase (502 aa).

Substrate is bound at residue arginine 54. 4 residues coordinate K(+): asparagine 56, serine 58, aspartate 88, and threonine 89. Residue 56–59 participates in ATP binding; sequence NFSH. 2 residues coordinate ATP: arginine 95 and lysine 184. Glutamate 252 serves as a coordination point for Mg(2+). 3 residues coordinate substrate: glycine 275, aspartate 276, and threonine 308. A Mg(2+)-binding site is contributed by aspartate 276.

This sequence belongs to the pyruvate kinase family. Homotetramer. The cofactor is Mg(2+). K(+) serves as cofactor.

The enzyme catalyses pyruvate + ATP = phosphoenolpyruvate + ADP + H(+). It participates in carbohydrate degradation; glycolysis; pyruvate from D-glyceraldehyde 3-phosphate: step 5/5. With respect to regulation, regulated by phosphoenolpyruvate substrate and is allosterically activated by ribose-5-phosphate, AMP and other nucleoside monophosphates but not by fructose-1,6-bisphosphate. The polypeptide is Pyruvate kinase (pyk) (Lactococcus lactis subsp. lactis (strain IL1403) (Streptococcus lactis)).